The following is a 349-amino-acid chain: Flavonol synthase/flavanone 3-hydroxylase (349 aa).

The Fe2OG dioxygenase domain occupies 213–310; sequence DIVYMLKINY…RMSWPVFLEP (98 aa). Fe cation-binding residues include His-238, Asp-240, and His-291.

Belongs to the iron/ascorbate-dependent oxidoreductase family. Requires Fe cation as cofactor. L-ascorbate is required as a cofactor.

It is found in the cytoplasm. The catalysed reaction is a (2R,3R)-dihydroflavonol + 2-oxoglutarate + O2 = a flavonol + succinate + CO2 + H2O. The enzyme catalyses a (2S)-flavan-4-one + 2-oxoglutarate + O2 = a (2R,3R)-dihydroflavonol + succinate + CO2. It functions in the pathway secondary metabolite biosynthesis; flavonoid biosynthesis. Catalyzes the formation of flavonols from dihydroflavonols. It can act on dihydrokaempferol to produce kaempferol, on dihydroquercetin to produce quercitin and on dihydromyricetin to produce myricetin. The polypeptide is Flavonol synthase/flavanone 3-hydroxylase (Solanum tuberosum (Potato)).